Reading from the N-terminus, the 1006-residue chain is Pleckstrin homology domain-containing family G member 5 (1006 aa).

Disordered stretches follow at residues Met-1 to Asp-71, Pro-148 to Ala-198, and Glu-212 to Trp-242. The segment covering Asp-36–Ser-45 has biased composition (acidic residues). Basic and acidic residues-rich tracts occupy residues Pro-151–Lys-165 and Glu-183–Leu-194. Positions Ser-224–Trp-242 are enriched in low complexity. The DH domain occupies His-336–Cys-528. Positions Gln-584 to Asn-684 constitute a PH domain. Disordered regions lie at residues Arg-690–Gly-754, Asp-768–Gly-820, and Ala-837–Pro-863. Acidic residues predominate over residues Leu-704–Asp-726. Composition is skewed to polar residues over residues Ser-727–Gly-754 and Thr-769–Asp-785. A Phosphothreonine modification is found at Thr-729. Ser-734 is modified (phosphoserine). Low complexity predominate over residues Glu-786–Leu-803. The segment covering Pro-847–Pro-856 has biased composition (pro residues). Phosphoserine is present on residues Ser-851, Ser-876, and Ser-881. The segment at Ala-950–Gln-979 is disordered.

As to quaternary structure, interacts with GIPC1/synectin and RHOA. Predominantly expressed in the peripheral nervous system and brain. Highest expression is observed in heart, lung, kidney, testis and moderate expression is present in spleen, pancreas, skeletal muscle, ovary and liver. Weakly expressed in glioblastoma (GBM) cell lines.

The protein resides in the cytoplasm. Its subcellular location is the perinuclear region. The protein localises to the cell membrane. It localises to the cell junction. It is found in the cell projection. The protein resides in the lamellipodium. Functions as a guanine exchange factor (GEF) for RAB26 and thus regulates autophagy of synaptic vesicles in axon terminal of motoneurons. Involved in the control of neuronal cell differentiation. Plays a role in angiogenesis through regulation of endothelial cells chemotaxis. Also affects the migration, adhesion, and matrix/bone degradation in macrophages and osteoclasts. This Homo sapiens (Human) protein is Pleckstrin homology domain-containing family G member 5 (PLEKHG5).